Here is a 496-residue protein sequence, read N- to C-terminus: Lysosomal Pro-X carboxypeptidase (496 aa).

Residues 1–21 (MGRRALLLLLLSFLAPWATIA) form the signal peptide. The propeptide occupies 22–45 (LRPALRALGSLHLPTNPTSLPAVA). N-linked (GlcNAc...) asparagine glycosylation is found at Asn47 and Asn101. The active-site Charge relay system is the Ser179. Residues 194 to 334 (HMVVGALAAS…QNIFQALNVY (141 aa)) form an SKS domain region. Disulfide bonds link Cys215-Cys372, Cys233-Cys310, Cys264-Cys343, and Cys364-Cys394. Residues Asn317, Asn336, and Asn345 are each glycosylated (N-linked (GlcNAc...) asparagine). Residue Asn415 is glycosylated (N-linked (GlcNAc...) asparagine). Active-site charge relay system residues include Asp430 and His455.

Belongs to the peptidase S28 family. As to quaternary structure, homodimer. In terms of tissue distribution, highest levels in placenta, lung and liver. Also present in heart, brain, pancreas and kidney.

The protein resides in the lysosome. The catalysed reaction is Cleavage of a -Pro-|-Xaa bond to release a C-terminal amino acid.. Its function is as follows. Cleaves C-terminal amino acids linked to proline in peptides such as angiotensin II, III and des-Arg9-bradykinin. This cleavage occurs at acidic pH, but enzymatic activity is retained with some substrates at neutral pH. This chain is Lysosomal Pro-X carboxypeptidase (PRCP), found in Homo sapiens (Human).